Consider the following 466-residue polypeptide: Dihydrolipoyl dehydrogenase (466 aa).

Residues 34–42, lysine 51, and glycine 114 each bind FAD; that span reads ERVHLGGIC. Residues cysteine 42 and cysteine 47 are joined by a disulfide bond. Residues 180 to 184, glutamate 203, and 269 to 272 contribute to the NAD(+) site; these read GSGAI and AIGV. The FAD site is built by aspartate 311 and alanine 319. Catalysis depends on histidine 445, which acts as the Proton acceptor.

Belongs to the class-I pyridine nucleotide-disulfide oxidoreductase family. As to quaternary structure, homodimer. FAD serves as cofactor.

It localises to the cytoplasm. It catalyses the reaction N(6)-[(R)-dihydrolipoyl]-L-lysyl-[protein] + NAD(+) = N(6)-[(R)-lipoyl]-L-lysyl-[protein] + NADH + H(+). Functionally, lipoamide dehydrogenase is a component of the alpha-ketoacid dehydrogenase complexes. The protein is Dihydrolipoyl dehydrogenase (lpd) of Zymomonas mobilis subsp. mobilis (strain ATCC 31821 / ZM4 / CP4).